We begin with the raw amino-acid sequence, 172 residues long: Large ribosomal subunit protein uL10 (172 aa).

The protein belongs to the universal ribosomal protein uL10 family. In terms of assembly, part of the ribosomal stalk of the 50S ribosomal subunit. The N-terminus interacts with L11 and the large rRNA to form the base of the stalk. The C-terminus forms an elongated spine to which L12 dimers bind in a sequential fashion forming a multimeric L10(L12)X complex.

In terms of biological role, forms part of the ribosomal stalk, playing a central role in the interaction of the ribosome with GTP-bound translation factors. The chain is Large ribosomal subunit protein uL10 from Chlorobium limicola (strain DSM 245 / NBRC 103803 / 6330).